The sequence spans 331 residues: Mycothiol acetyltransferase (331 aa).

Residue E33 coordinates 1D-myo-inositol 2-(L-cysteinylamino)-2-deoxy-alpha-D-glucopyranoside. A compositionally biased stretch (low complexity) spans H59–A86. The segment at H59–A89 is disordered. Position 115 to 120 (R115 to S120) interacts with acetyl-CoA. Positions L183–G331 constitute an N-acetyltransferase domain. 1D-myo-inositol 2-(L-cysteinylamino)-2-deoxy-alpha-D-glucopyranoside-binding residues include E210, K249, and E261. Residue V265–T267 participates in acetyl-CoA binding. Y299 is a binding site for 1D-myo-inositol 2-(L-cysteinylamino)-2-deoxy-alpha-D-glucopyranoside. Residue N304–R309 coordinates acetyl-CoA.

This sequence belongs to the acetyltransferase family. MshD subfamily. Monomer.

It catalyses the reaction 1D-myo-inositol 2-(L-cysteinylamino)-2-deoxy-alpha-D-glucopyranoside + acetyl-CoA = mycothiol + CoA + H(+). Catalyzes the transfer of acetyl from acetyl-CoA to desacetylmycothiol (Cys-GlcN-Ins) to form mycothiol. This is Mycothiol acetyltransferase from Brachybacterium faecium (strain ATCC 43885 / DSM 4810 / JCM 11609 / LMG 19847 / NBRC 14762 / NCIMB 9860 / 6-10).